A 23-amino-acid chain; its full sequence is Toxin Acra2 (23 aa).

Residues 2-23 enclose the LCN-type CS-alpha/beta domain; sequence KDGYIVDSNGCAPECFPTNXGC.

Contains 4 disulfide bonds. In terms of tissue distribution, expressed by the venom gland.

Its subcellular location is the secreted. Excitatory insect toxins induce a spastic paralysis. They bind voltage-independently at site-4 of sodium channels (Nav) and shift the voltage of activation toward more negative potentials thereby affecting sodium channel activation and promoting spontaneous and repetitive firing. Is lethal to mice. Is about 1% of the total protein in the venom. The polypeptide is Toxin Acra2 (Androctonus crassicauda (Arabian fat-tailed scorpion)).